Here is a 403-residue protein sequence, read N- to C-terminus: Acetate kinase (403 aa).

Mg(2+) is bound at residue asparagine 13. Lysine 20 contacts ATP. Arginine 94 serves as a coordination point for substrate. Aspartate 153 functions as the Proton donor/acceptor in the catalytic mechanism. ATP contacts are provided by residues 213–217 (HLGNG), 288–290 (DFR), and 336–340 (GIGEN). Glutamate 390 contacts Mg(2+).

It belongs to the acetokinase family. In terms of assembly, homodimer. Mg(2+) serves as cofactor. It depends on Mn(2+) as a cofactor.

Its subcellular location is the cytoplasm. The catalysed reaction is acetate + ATP = acetyl phosphate + ADP. It functions in the pathway metabolic intermediate biosynthesis; acetyl-CoA biosynthesis; acetyl-CoA from acetate: step 1/2. Catalyzes the formation of acetyl phosphate from acetate and ATP. Can also catalyze the reverse reaction. The sequence is that of Acetate kinase from Buchnera aphidicola subsp. Schizaphis graminum (strain Sg).